A 1382-amino-acid chain; its full sequence is DNA-directed RNA polymerase subunit beta' (1382 aa).

Zn(2+) is bound by residues Cys-70, Cys-72, Cys-85, and Cys-88. Mg(2+) contacts are provided by Asp-460, Asp-462, and Asp-464. Positions 808, 882, 889, and 892 each coordinate Zn(2+).

Belongs to the RNA polymerase beta' chain family. The RNAP catalytic core consists of 2 alpha, 1 beta, 1 beta' and 1 omega subunit. When a sigma factor is associated with the core the holoenzyme is formed, which can initiate transcription. It depends on Mg(2+) as a cofactor. Zn(2+) serves as cofactor.

The enzyme catalyses RNA(n) + a ribonucleoside 5'-triphosphate = RNA(n+1) + diphosphate. DNA-dependent RNA polymerase catalyzes the transcription of DNA into RNA using the four ribonucleoside triphosphates as substrates. This is DNA-directed RNA polymerase subunit beta' from Geobacter sp. (strain M21).